Reading from the N-terminus, the 330-residue chain is MGSNQRIVITPGEPAGIGPDLVAALAQQAWPVELVICADPALLTARAQQLGLPLRLHSYRPEQPATPRPAGELTVLAIDTPAPVAAGELNVANSHYVVETLARACDSCLNGEFAALLTGPVHKGVINDGGLPFSGHTEYFAQRSGRERVVMMLATESLRVALATTHLPLLAVPGAVTRQSLDEVITILVHDLQQQFGIAQPCIYVCGLNPHAGEGGHMGREEIEVITPALDTLRAKGYNLVGPLPADTLFQPKYLQQADAVLAMYHDQGLPVLKYQGFGRAVNITLGLPFIRTSVDHGTALELAGSGQAEAGSIKTALNIAIDMIKHRNE.

Residues H136 and T137 each contribute to the substrate site. The a divalent metal cation site is built by H166, H211, and H266. Substrate contacts are provided by K274, N283, and R292.

It belongs to the PdxA family. In terms of assembly, homodimer. The cofactor is Zn(2+). It depends on Mg(2+) as a cofactor. Co(2+) serves as cofactor.

It is found in the cytoplasm. It catalyses the reaction 4-(phosphooxy)-L-threonine + NAD(+) = 3-amino-2-oxopropyl phosphate + CO2 + NADH. The protein operates within cofactor biosynthesis; pyridoxine 5'-phosphate biosynthesis; pyridoxine 5'-phosphate from D-erythrose 4-phosphate: step 4/5. Its function is as follows. Catalyzes the NAD(P)-dependent oxidation of 4-(phosphooxy)-L-threonine (HTP) into 2-amino-3-oxo-4-(phosphooxy)butyric acid which spontaneously decarboxylates to form 3-amino-2-oxopropyl phosphate (AHAP). In Sodalis glossinidius (strain morsitans), this protein is 4-hydroxythreonine-4-phosphate dehydrogenase.